The following is a 121-amino-acid chain: Holo-[acyl-carrier-protein] synthase (121 aa).

Positions 6 and 55 each coordinate Mg(2+).

The protein belongs to the P-Pant transferase superfamily. AcpS family. Requires Mg(2+) as cofactor.

Its subcellular location is the cytoplasm. It catalyses the reaction apo-[ACP] + CoA = holo-[ACP] + adenosine 3',5'-bisphosphate + H(+). In terms of biological role, transfers the 4'-phosphopantetheine moiety from coenzyme A to a Ser of acyl-carrier-protein. The protein is Holo-[acyl-carrier-protein] synthase of Chloroherpeton thalassium (strain ATCC 35110 / GB-78).